We begin with the raw amino-acid sequence, 539 residues long: Chaperonin GroEL 1 (539 aa).

ATP contacts are provided by residues Thr-29–Pro-32, Asp-86–Thr-90, Gly-413, and Asp-493.

Belongs to the chaperonin (HSP60) family. Forms a cylinder of 14 subunits composed of two heptameric rings stacked back-to-back. Interacts with the co-chaperonin GroES.

The protein localises to the cytoplasm. It catalyses the reaction ATP + H2O + a folded polypeptide = ADP + phosphate + an unfolded polypeptide.. In terms of biological role, together with its co-chaperonin GroES, plays an essential role in assisting protein folding. The GroEL-GroES system forms a nano-cage that allows encapsulation of the non-native substrate proteins and provides a physical environment optimized to promote and accelerate protein folding. The protein is Chaperonin GroEL 1 of Acidothermus cellulolyticus (strain ATCC 43068 / DSM 8971 / 11B).